A 654-amino-acid chain; its full sequence is Protein LYK2 (654 aa).

The signal sequence occupies residues 1 to 25 (MAVSVSKQYMTSLVVILLFISLSSL). Residues 26-241 (SPTSTSHSCD…PSKKKRSKMK (216 aa)) lie on the Extracellular side of the membrane. Intrachain disulfides connect Cys-50–Cys-102, Cys-57–Cys-163, and Cys-100–Cys-161. Residues Asn-103, Asn-170, Asn-193, and Asn-204 are each glycosylated (N-linked (GlcNAc...) asparagine). One copy of the LysM; degenerate repeat lies at 177 to 217 (YPVGVRDSVSSLAVRFNTTEDAIVSANNKSGVVPLKPALIP). The tract at residues 218–238 (LDHKPEKQGSRKRNPSKKKRS) is disordered. The segment covering 227–238 (SRKRNPSKKKRS) has biased composition (basic residues). The chain crosses the membrane as a helical span at residues 242-262 (LMIAVSSAIAGVCGLVTLMVF). Residues 263-654 (GYLHWKKETQ…PLVKKSSIID (392 aa)) are Cytoplasmic-facing. The 296-residue stretch at 324 to 619 (TPRKPVLEIY…EIAERVSRLV (296 aa)) folds into the Protein kinase domain. ATP-binding positions include 330-338 (LEIYAFEEL) and Lys-368.

It belongs to the protein kinase superfamily. Ser/Thr protein kinase family.

The protein localises to the cell membrane. Its function is as follows. May recognize microbe-derived N-acetylglucosamine (NAG)-containing ligands. The polypeptide is Protein LYK2 (LYK2) (Arabidopsis thaliana (Mouse-ear cress)).